The sequence spans 441 residues: Proline--tRNA ligase (441 aa).

It belongs to the class-II aminoacyl-tRNA synthetase family. ProS type 2 subfamily. Homodimer.

It localises to the cytoplasm. It catalyses the reaction tRNA(Pro) + L-proline + ATP = L-prolyl-tRNA(Pro) + AMP + diphosphate. Its function is as follows. Catalyzes the attachment of proline to tRNA(Pro) in a two-step reaction: proline is first activated by ATP to form Pro-AMP and then transferred to the acceptor end of tRNA(Pro). The polypeptide is Proline--tRNA ligase (Afipia carboxidovorans (strain ATCC 49405 / DSM 1227 / KCTC 32145 / OM5) (Oligotropha carboxidovorans)).